We begin with the raw amino-acid sequence, 603 residues long: Mitochondrial distribution and morphology protein 34 (603 aa).

Residues 1 to 205 (MAFNFNWSPL…SPEYQEIETE (205 aa)) enclose the SMP-LTD domain. Over residues 320–332 (KSGASSVASGSTG) the composition is skewed to low complexity. Disordered stretches follow at residues 320–511 (KSGA…PLLR) and 558–603 (IARK…AYVA). Residues 333-351 (NETLSSRPTLASSYSTSAG) show a composition bias toward polar residues. Over residues 371–380 (VVDLRRKDGA) the composition is skewed to basic and acidic residues. Over residues 383-403 (GVSTEANTPLPSTQVSDTSSV) the composition is skewed to polar residues. Low complexity predominate over residues 452 to 463 (PLLAPAPLIPNA). Residues 500–509 (RQAQQSTSPL) show a composition bias toward polar residues. Over residues 558–570 (IARKVQEEKDKSS) the composition is skewed to basic and acidic residues.

It belongs to the MDM34 family. In terms of assembly, component of the ER-mitochondria encounter structure (ERMES) or MDM complex, composed of mmm1, mdm10, mdm12 and mdm34.

Its subcellular location is the mitochondrion outer membrane. Component of the ERMES/MDM complex, which serves as a molecular tether to connect the endoplasmic reticulum (ER) and mitochondria. Components of this complex are involved in the control of mitochondrial shape and protein biogenesis, and function in nonvesicular lipid trafficking between the ER and mitochondria. Mdm34 is required for the interaction of the ER-resident membrane protein mmm1 and the outer mitochondrial membrane-resident beta-barrel protein mdm10. The polypeptide is Mitochondrial distribution and morphology protein 34 (Pyrenophora tritici-repentis (strain Pt-1C-BFP) (Wheat tan spot fungus)).